The sequence spans 245 residues: OVARIAN TUMOR DOMAIN-containing deubiquitinating enzyme 11 (245 aa).

The segment at 1-37 (MDENHRNPFANASTSARASGSTSASSNSSFSSSVADT) is disordered. The span at 10 to 35 (ANASTSARASGSTSASSNSSFSSSVA) shows a compositional bias: low complexity. The region spanning 101–225 (LAELQMEGDG…EVHYNSLYAN (125 aa)) is the OTU domain. Asp109 is an active-site residue. The active-site Nucleophile is the Cys112. Residue His218 is part of the active site.

It belongs to the peptidase C85 family.

The enzyme catalyses Thiol-dependent hydrolysis of ester, thioester, amide, peptide and isopeptide bonds formed by the C-terminal Gly of ubiquitin (a 76-residue protein attached to proteins as an intracellular targeting signal).. Its function is as follows. Hydrolase that can remove conjugated ubiquitin from proteins in vitro and may therefore play an important regulatory role at the level of protein turnover by preventing degradation. Inactive cysteine protease. The protein is OVARIAN TUMOR DOMAIN-containing deubiquitinating enzyme 11 of Arabidopsis thaliana (Mouse-ear cress).